Consider the following 280-residue polypeptide: Extracellular metalloprotease GLRG_06286 (280 aa).

The N-terminal stretch at 1–17 is a signal peptide; sequence MQVTFTLVAALAGMASA. Asparagine 51 carries N-linked (GlcNAc...) asparagine glycosylation. Zn(2+) is bound at residue histidine 196. The active site involves glutamate 197. Position 200 (histidine 200) interacts with Zn(2+). The disordered stretch occupies residues 217-236; sequence DSIADTPAQSSPSSGCPVGR. Residues cysteine 232 and cysteine 259 are joined by a disulfide bond.

The protein belongs to the peptidase M43B family.

The protein localises to the secreted. Functionally, secreted metalloproteinase that allows assimilation of proteinaceous substrates. In Colletotrichum graminicola (strain M1.001 / M2 / FGSC 10212) (Maize anthracnose fungus), this protein is Extracellular metalloprotease GLRG_06286.